Here is a 2149-residue protein sequence, read N- to C-terminus: Serine/threonine-protein kinase WNK2 (2149 aa).

The segment covering 1-10 (MDGDGGRRDA) has biased composition (basic and acidic residues). Disordered stretches follow at residues 1–75 (MDGD…QRRV) and 87–183 (ERAR…EDDL). Residues R19 and R30 each carry the omega-N-methylarginine modification. S45 carries the post-translational modification Phosphoserine. Residues 95–114 (APAPAAPAAPPGSPSVPSDP) are compositionally biased toward pro residues. The span at 161–172 (AKPEPGRARKDE) shows a compositional bias: basic and acidic residues. Over residues 173–182 (PEEEEDDEDD) the composition is skewed to acidic residues. One can recognise a Protein kinase domain in the interval 195–453 (LKFDIELGRG…IKDLLSHAFF (259 aa)). ATP-binding positions include S205, 275–278 (TELM), and K325. D342 serves as the catalytic Proton acceptor. Residues S352 and S356 each carry the phosphoserine; by autocatalysis modification. At S560 the chain carries Phosphoserine. 3 disordered regions span residues 578–630 (HAQS…DSQS), 703–728 (SMSFTPVLPPPSTPVPTGPSQPAPPV), and 1067–1133 (QEEQ…ERAS). Positions 605–625 (ASVTSLASDSTFDSGQGSTVY) are enriched in polar residues. The span at 709–728 (VLPPPSTPVPTGPSQPAPPV) shows a compositional bias: pro residues. The segment covering 1081–1092 (QSSESFGGSDVT) has biased composition (polar residues). A Phosphoserine modification is found at S1098. Positions 1115–1126 (ARKHHRRSTRAR) are enriched in basic residues. At S1210 the chain carries Phosphoserine. Disordered stretches follow at residues 1211–1234 (EDTDADHGSDTGTSPPHLGTCGLA) and 1270–1502 (PATD…GFVD). 2 stretches are compositionally biased toward low complexity: residues 1275 to 1292 (SESSPPLPLSSLQPEASQ) and 1317 to 1353 (SQAGSSNPPGGASAPLAPSSPPVTTVIPAAPATSTVP). Positions 1386-1400 (RSAQCTAQPLSTGQG) are enriched in polar residues. The segment covering 1470 to 1485 (LPSPPLGPTAPPPPPS) has biased composition (pro residues). Residues S1507, S1566, and S1594 each carry the phosphoserine modification. Disordered stretches follow at residues 1521 to 1727 (VPTS…PSSP) and 1739 to 1778 (ASSIEVGVEEPASSDSGDERPRRRSQVQKQSSLPGTGGVA). Residues 1553 to 1567 (SDKTPSLTQQTQPSL) show a composition bias toward polar residues. Residues 1587 to 1597 (SSPMTAESSSS) are compositionally biased toward low complexity. The span at 1610–1629 (ASDSSTAPSVPQDASGSSVP) shows a compositional bias: polar residues. A phosphoserine mark is found at S1725, S1726, S1770, and S1797. Polar residues predominate over residues 1916 to 1928 (ASSTGHLSDSSRG). The disordered stretch occupies residues 1916–1947 (ASSTGHLSDSSRGPPTKDPRGTKAVQTQQPCS). Phosphoserine is present on S1962. Residues 2018-2031 (SSLYDSPGSSTSSL) show a composition bias toward polar residues. Disordered stretches follow at residues 2018-2044 (SSLYDSPGSSTSSLAPGPEPGPQPTLH) and 2122-2149 (GPLSTTATPGATPALPVPIPDPESEKPD). Residues 2122 to 2135 (GPLSTTATPGATPA) are compositionally biased toward low complexity.

The protein belongs to the protein kinase superfamily. Ser/Thr protein kinase family. WNK subfamily. Forms a complex with the phosphorylated form of STK39 in the brain. It depends on Mg(2+) as a cofactor. In terms of processing, autophosphorylated. Autophosphorylation at Ser-352 and Ser-356 promotes its activity. In terms of tissue distribution, brain and heart.

The protein localises to the cytoplasm. Its subcellular location is the cell membrane. The enzyme catalyses L-seryl-[protein] + ATP = O-phospho-L-seryl-[protein] + ADP + H(+). It carries out the reaction L-threonyl-[protein] + ATP = O-phospho-L-threonyl-[protein] + ADP + H(+). With respect to regulation, activation requires autophosphorylation of Ser-356 and, to a lower extent, Ser-352. Functionally, serine/threonine-protein kinase component of the WNK2-SPAK/OSR1 kinase cascade, which plays an important role in the regulation of electrolyte homeostasis, cell signaling, survival, and proliferation. The WNK2-SPAK/OSR1 kinase cascade is composed of WNK2, which mediates phosphorylation and activation of downstream kinases OXSR1/OSR1 and STK39/SPAK. Following activation, OXSR1/OSR1 and STK39/SPAK catalyze phosphorylation of ion cotransporters, regulating their activity. Acts as an activator and inhibitor of sodium-coupled chloride cotransporters and potassium-coupled chloride cotransporters respectively. Activates SLC12A2, SCNN1A, SCNN1B, SCNN1D and SGK1 and inhibits SLC12A5. Negatively regulates the EGF-induced activation of the ERK/MAPK-pathway and the downstream cell cycle progression. Affects MAPK3/MAPK1 activity by modulating the activity of MAP2K1 and this modulation depends on phosphorylation of MAP2K1 by PAK1. WNK2 acts by interfering with the activity of PAK1 by controlling the balance of the activity of upstream regulators of PAK1 activity, RHOA and RAC1, which display reciprocal activity. In Mus musculus (Mouse), this protein is Serine/threonine-protein kinase WNK2.